The following is a 644-amino-acid chain: Translation factor guf1, mitochondrial (644 aa).

The transit peptide at 1-31 (MTLRRFSYTFQARILRGLQARPVFVLPSRSH) directs the protein to the mitochondrion. The region spanning 51-232 (VNIRNWAIIS…AIIQRVPHPI (182 aa)) is the tr-type G domain. GTP is bound by residues 60–67 (SHIDHGKS), 125–129 (DTPGH), and 179–182 (NKID).

The protein belongs to the TRAFAC class translation factor GTPase superfamily. Classic translation factor GTPase family. LepA subfamily.

It localises to the mitochondrion inner membrane. The catalysed reaction is GTP + H2O = GDP + phosphate + H(+). In terms of biological role, promotes mitochondrial protein synthesis. May act as a fidelity factor of the translation reaction, by catalyzing a one-codon backward translocation of tRNAs on improperly translocated ribosomes. Binds to mitochondrial ribosomes in a GTP-dependent manner. The sequence is that of Translation factor guf1, mitochondrial (guf1) from Schizosaccharomyces japonicus (strain yFS275 / FY16936) (Fission yeast).